The chain runs to 637 residues: Glutathione hydrolase 3 (637 aa).

Residues 28–48 traverse the membrane as a helical segment; it reads LKISLLLLLILLATSGYYSFS. Asn50 carries N-linked (GlcNAc...) asparagine glycosylation. Arg147 provides a ligand contact to L-glutamate. N-linked (GlcNAc...) asparagine glycosylation is found at Asn271, Asn374, and Asn398. Thr418 (nucleophile) is an active-site residue. L-glutamate is bound by residues Thr436, Asn438, Glu457, Asp460, 488 to 489, and 509 to 510; these read SS and GG. N-linked (GlcNAc...) asparagine glycosylation occurs at Asn553.

Belongs to the gamma-glutamyltransferase family. Expressed in roots, cotyledons, leaves, flowers and siliques.

Its subcellular location is the vacuole membrane. The catalysed reaction is an N-terminal (5-L-glutamyl)-[peptide] + an alpha-amino acid = 5-L-glutamyl amino acid + an N-terminal L-alpha-aminoacyl-[peptide]. It catalyses the reaction glutathione + H2O = L-cysteinylglycine + L-glutamate. It carries out the reaction an S-substituted glutathione + H2O = an S-substituted L-cysteinylglycine + L-glutamate. It functions in the pathway sulfur metabolism; glutathione metabolism. May play a role in protecting plants from some xenobiotic chemicals by degrading vacuolar glutathione conjugates into cysteine conjugates. The sequence is that of Glutathione hydrolase 3 (GGT3) from Arabidopsis thaliana (Mouse-ear cress).